Here is a 138-residue protein sequence, read N- to C-terminus: Nucleoside diphosphate kinase (138 aa).

ATP contacts are provided by Lys-9, Phe-57, Arg-85, Thr-91, Arg-102, and Asn-112. His-120 acts as the Pros-phosphohistidine intermediate in catalysis.

Belongs to the NDK family. In terms of assembly, homotetramer. It depends on Mg(2+) as a cofactor.

Its subcellular location is the cytoplasm. It catalyses the reaction a 2'-deoxyribonucleoside 5'-diphosphate + ATP = a 2'-deoxyribonucleoside 5'-triphosphate + ADP. The catalysed reaction is a ribonucleoside 5'-diphosphate + ATP = a ribonucleoside 5'-triphosphate + ADP. Functionally, major role in the synthesis of nucleoside triphosphates other than ATP. The ATP gamma phosphate is transferred to the NDP beta phosphate via a ping-pong mechanism, using a phosphorylated active-site intermediate. The sequence is that of Nucleoside diphosphate kinase from Streptococcus agalactiae serotype V (strain ATCC BAA-611 / 2603 V/R).